Here is a 436-residue protein sequence, read N- to C-terminus: UDP-N-acetylglucosamine 1-carboxyvinyltransferase 1 (436 aa).

Phosphoenolpyruvate is bound at residue Lys22–Asn23. Residue Arg93 participates in UDP-N-acetyl-alpha-D-glucosamine binding. Cys117 serves as the catalytic Proton donor. Residue Cys117 is modified to 2-(S-cysteinyl)pyruvic acid O-phosphothioketal. Residues Arg122–Gln126, Asp306, and Val328 each bind UDP-N-acetyl-alpha-D-glucosamine.

This sequence belongs to the EPSP synthase family. MurA subfamily.

The protein resides in the cytoplasm. It carries out the reaction phosphoenolpyruvate + UDP-N-acetyl-alpha-D-glucosamine = UDP-N-acetyl-3-O-(1-carboxyvinyl)-alpha-D-glucosamine + phosphate. Its pathway is cell wall biogenesis; peptidoglycan biosynthesis. Cell wall formation. Adds enolpyruvyl to UDP-N-acetylglucosamine. Essential for cell growth. The protein is UDP-N-acetylglucosamine 1-carboxyvinyltransferase 1 of Bacillus subtilis (strain 168).